Reading from the N-terminus, the 972-residue chain is Multiple C2 domain and transmembrane region protein 8 (972 aa).

The 107-residue stretch at 1-107 (MMSNLKLGVE…PYSEAVGLPY (107 aa)) folds into the C2 1 domain. The disordered stretch occupies residues 142–203 (PNLISTKKIP…MMESSLYQAP (62 aa)). Residues 150–159 (IPSKSRHKFH) are compositionally biased toward basic residues. A compositionally biased stretch (polar residues) spans 161-173 (IPTNESNHSPRGN). A compositionally biased stretch (pro residues) spans 179–194 (PQPPPPQSQTALPPPM). C2 domains follow at residues 232–352 (GGGK…PEWY), 384–507 (ALNA…NRWF), and 543–669 (YSSD…SHSY). Positions 265, 271, 318, 320, and 325 each coordinate Ca(2+). 2 consecutive transmembrane segments (helical) span residues 803-823 (IIFL…SLCL) and 924-944 (TVVL…LYIM).

Belongs to the MCTP family. Ca(2+) serves as cofactor. Expressed in root hairs.

It localises to the membrane. The protein resides in the vesicle. Its function is as follows. May function as a signaling molecule by regulating the trafficking of other regulators. This Arabidopsis thaliana (Mouse-ear cress) protein is Multiple C2 domain and transmembrane region protein 8.